The sequence spans 362 residues: MKLSALLALSASTAVLAAPAVHHSDNHHHNDKRAVVTVTQYVNADGTVVIPAANTATSAAADGKVESVAAATTTLSSTAAAATTSAAASSSSSSSSSSSSVGSGDFEDGTISCSDFPSGQGAVSLDWLGLGGWASIMDMNGNTATSCQDGYYCSYACSPGYAKTQWPSEQPSDGRSVGGLYCKNGKLYRSNTDTNSLCVEGQGSAQAVNKVSGSIAICGTDYPGSENMVVPTVVGAGSSQPINVIKEDSYYQWQGKKTSAQYYVNNAGVSVEDGCIWGTEGSGVGNWAPVVLGAGYTDGITYLSIIPNPNNKEAPNFNIKIVATDGSTVNGACSYENGVYSGSGSDGCTVSVTSGSANFVFY.

The signal sequence occupies residues 1–17; the sequence is MKLSALLALSASTAVLA.

This sequence belongs to the SUN family.

It is found in the mitochondrion outer membrane. It localises to the secreted. The protein localises to the cell wall. Functionally, involved in aging, oxidative stress response, and in the regulation of mitochondrial biogenesis. Inactivation of UTH1 increases life span, leads to higher resistance to heat stress and to hydrogen peroxide, and increases sensitivity to the superoxide radical-generating drug paraquat and to copper. Also required for the selective autophagic degradation of mitochondria (mitophagy) in response to nitrogen starvation. Involved in the remodeling of the cell wall during the various phases of yeast culture development and under various environmental conditions and plays a role in septation. Involved in cell sensitivity to boric acid. The protein is Probable secreted beta-glucosidase UTH1 (UTH1) of Saccharomyces cerevisiae (strain RM11-1a) (Baker's yeast).